A 902-amino-acid chain; its full sequence is Probable leucine--tRNA ligase, mitochondrial (902 aa).

At Lys-67 the chain carries N6-acetyllysine. Residues 91 to 101 (YPSGKLHMGHV) carry the 'HIGH' region motif. Lys-235 bears the N6-acetyllysine mark. Residues 638-642 (KMSKS) carry the 'KMSKS' region motif. Lys-641 contacts ATP.

Belongs to the class-I aminoacyl-tRNA synthetase family.

Its subcellular location is the mitochondrion matrix. It carries out the reaction tRNA(Leu) + L-leucine + ATP = L-leucyl-tRNA(Leu) + AMP + diphosphate. The polypeptide is Probable leucine--tRNA ligase, mitochondrial (Lars2) (Mus musculus (Mouse)).